The following is a 282-amino-acid chain: Probable porphobilinogen deaminase (282 aa).

Cys233 bears the S-(dipyrrolylmethanemethyl)cysteine mark.

The protein belongs to the HMBS family. It depends on dipyrromethane as a cofactor.

It carries out the reaction 4 porphobilinogen + H2O = hydroxymethylbilane + 4 NH4(+). It participates in porphyrin-containing compound metabolism; protoporphyrin-IX biosynthesis; coproporphyrinogen-III from 5-aminolevulinate: step 2/4. In terms of biological role, tetrapolymerization of the monopyrrole PBG into the hydroxymethylbilane pre-uroporphyrinogen in several discrete steps. The polypeptide is Probable porphobilinogen deaminase (Picrophilus torridus (strain ATCC 700027 / DSM 9790 / JCM 10055 / NBRC 100828 / KAW 2/3)).